The primary structure comprises 515 residues: 1-pyrroline-5-carboxylate dehydrogenase (515 aa).

Active-site residues include glutamate 286 and cysteine 320.

This sequence belongs to the aldehyde dehydrogenase family. RocA subfamily.

It carries out the reaction L-glutamate 5-semialdehyde + NAD(+) + H2O = L-glutamate + NADH + 2 H(+). The protein operates within amino-acid degradation; L-proline degradation into L-glutamate; L-glutamate from L-proline: step 2/2. This Bacillus cereus (strain ATCC 10987 / NRS 248) protein is 1-pyrroline-5-carboxylate dehydrogenase.